Reading from the N-terminus, the 733-residue chain is Envelope glycoprotein H (733 aa).

Residues methionine 1–alanine 14 form the signal peptide. The Virion surface portion of the chain corresponds to isoleucine 15–isoleucine 707. Asparagine 78 and asparagine 119 each carry an N-linked (GlcNAc...) asparagine; by host glycan. The interval glycine 185–leucine 249 is interaction with gL. N-linked (GlcNAc...) asparagine; by host glycosylation is found at asparagine 266, asparagine 431, asparagine 561, asparagine 573, asparagine 612, asparagine 627, and asparagine 689. Residues isoleucine 708–methionine 728 form a helical membrane-spanning segment. Residues tyrosine 729–lysine 733 are Intravirion-facing.

Belongs to the herpesviridae glycoprotein H family. As to quaternary structure, interacts with glycoprotein L (gL); this interaction is necessary for the correct processing and cell surface expression of gH. The heterodimer gH/gL seems to interact with gB trimers during fusion. Post-translationally, N-glycosylated, O-glycosylated, and sialylated.

The protein resides in the virion membrane. It localises to the host cell membrane. The protein localises to the host endosome membrane. In terms of biological role, the heterodimer glycoprotein H-glycoprotein L is required for the fusion of viral and plasma membranes leading to virus entry into the host cell. Following initial binding to host receptor, membrane fusion is mediated by the fusion machinery composed of gB and the heterodimer gH/gL. May also be involved in the fusion between the virion envelope and the outer nuclear membrane during virion morphogenesis. In Alcelaphine herpesvirus 1 (strain C500) (AlHV-1), this protein is Envelope glycoprotein H.